The primary structure comprises 213 residues: UPF0056 membrane protein AF_2111 (213 aa).

6 helical membrane passes run 1–21, 51–71, 75–95, 118–138, 142–162, and 181–201; these read MDIA…FIII, IIAF…LDYF, ISSL…DILL, VFPL…GIVL, AGDV…YSIV, and ADIA…EFVF.

It belongs to the UPF0056 (MarC) family.

Its subcellular location is the cell membrane. The sequence is that of UPF0056 membrane protein AF_2111 from Archaeoglobus fulgidus (strain ATCC 49558 / DSM 4304 / JCM 9628 / NBRC 100126 / VC-16).